A 351-amino-acid polypeptide reads, in one-letter code: UDP-N-acetylglucosamine transporter slc35b4 (351 aa).

10 helical membrane-spanning segments follow: residues 6-26 (LISL…VISL), 37-57 (AILV…FVNI), 77-97 (IPLK…VLNN), 104-124 (IPIP…IVIG), 136-156 (QILS…SSMP), 173-193 (FSIG…LGLI), 209-229 (TIFY…DDIL), 252-274 (TLWV…VFIL), 282-302 (TCTL…VIYF), and 306-326 (FTSL…MYST).

It belongs to the nucleotide-sugar transporter family. SLC35B subfamily.

It localises to the golgi apparatus membrane. In terms of biological role, sugar transporter that specifically mediates the transport of UDP-N-acetylglucosamine (UDP-GlcNAc) from cytosol into Golgi. The sequence is that of UDP-N-acetylglucosamine transporter slc35b4 (slc35b4) from Dictyostelium discoideum (Social amoeba).